Here is a 697-residue protein sequence, read N- to C-terminus: Potassium channel KAT2 (697 aa).

Over 1–63 (MSISCTRNFF…PFDPRFRGWE (63 aa)) the chain is Cytoplasmic. A helical membrane pass occupies residues 64–84 (MWLVILVIYSAWICPFEFAFI). At 85–91 (TYKKDAL) the chain is on the extracellular side. The helical transmembrane segment at 92 to 112 (FIIDNIVNGFFAIDIILTFFV) threads the bilayer. At 113–134 (AYLDSHSYLLVDKPKKIAIRYL) the chain is on the cytoplasmic side. A helical membrane pass occupies residues 135 to 155 (STWFAFDVCSTAPFQSLSLLF). The Extracellular segment spans residues 156 to 165 (KYNGSEIGFR). The N-linked (GlcNAc...) asparagine glycan is linked to asparagine 158. A helical; Voltage-sensor membrane pass occupies residues 166–186 (VLSMLRLWRLRRVSSLFARLE). At 187–200 (KDIRFNYFWTRCTK) the chain is on the cytoplasmic side. Residues 201-221 (LISVTLFAVHCAGCFAYLIAD) form a helical membrane-spanning segment. Residues 222–248 (QYHDPTKTWIGAVYPNFKETSVWSRYV) lie on the Extracellular side of the membrane. The pore-forming intramembrane region spans 249 to 268 (TALYWSITTLTTTGYGDLHA). Over 269–272 (ENPR) the chain is Extracellular. A helical transmembrane segment spans residues 273-293 (EMLFFVFFMLFNLGFTSYLIG). At 294–697 (NMTNLVVHWT…HLYILINENS (404 aa)) the chain is on the cytoplasmic side. 377–496 (LFHGVSRNFL…RVIMNNLFMK (120 aa)) contributes to the a nucleoside 3',5'-cyclic phosphate binding site. In terms of domain architecture, KHA spans 629-697 (RVTIHLKSRD…HLYILINENS (69 aa)).

Belongs to the potassium channel family. Plant (TC 1.A.1.4) subfamily. The potassium channel is probably composed of a homo- or heterotetrameric complex of pore-forming subunits. May interact with KAT1. Interacts with SLAC1. In terms of tissue distribution, expressed in guard cells of hypocotyls, stems leaves and petioles. Detected also in the phloem of minor veins and in flower at a lower level.

Its subcellular location is the membrane. Its function is as follows. Highly selective inward-rectifying potassium channel. This voltage-dependent channel could mediate long-term potassium influx into guard cells leading to stomatal opening. Assuming opened or closed conformations in response to the voltage difference across the membrane, the channel is activated by hyperpolarization. The channel activity is enhanced upon external acidification. In Arabidopsis thaliana (Mouse-ear cress), this protein is Potassium channel KAT2 (KAT2).